Consider the following 82-residue polypeptide: UPF0335 protein pRhico085 (82 aa).

Belongs to the UPF0335 family.

This Azospirillum brasilense protein is UPF0335 protein pRhico085.